We begin with the raw amino-acid sequence, 232 residues long: Sugar fermentation stimulation protein homolog (232 aa).

This sequence belongs to the SfsA family.

In Geobacter sulfurreducens (strain ATCC 51573 / DSM 12127 / PCA), this protein is Sugar fermentation stimulation protein homolog.